The following is a 219-amino-acid chain: uncharacterized protein (219 aa).

Residues 1-26 (MNDRGVPNSRTGPSLLALLPAANSYA) form the signal peptide. Disordered regions lie at residues 36 to 57 (AVGV…TRGG) and 88 to 219 (SGLG…GLCE). A compositionally biased stretch (low complexity) spans 127-173 (LSPPSALGSSPAGRGRPAPAIAAAKSSPLSASAAPGRCGARPRAPSR). Residues 176–202 (RERRPRGNPRAPLRRGARGRRRSHTRG) show a composition bias toward basic residues.

This is an uncharacterized protein from Gallid herpesvirus 2 (strain Chicken/Md5/ATCC VR-987) (GaHV-2).